The chain runs to 206 residues: Urease accessory protein UreG (206 aa).

14 to 21 (GPVGSGKT) provides a ligand contact to GTP.

The protein belongs to the SIMIBI class G3E GTPase family. UreG subfamily. Homodimer. UreD, UreF and UreG form a complex that acts as a GTP-hydrolysis-dependent molecular chaperone, activating the urease apoprotein by helping to assemble the nickel containing metallocenter of UreC. The UreE protein probably delivers the nickel.

The protein resides in the cytoplasm. Facilitates the functional incorporation of the urease nickel metallocenter. This process requires GTP hydrolysis, probably effectuated by UreG. This Methylocella silvestris (strain DSM 15510 / CIP 108128 / LMG 27833 / NCIMB 13906 / BL2) protein is Urease accessory protein UreG.